A 407-amino-acid chain; its full sequence is MGCSASKDTTNSKDGAASKGGKDGKTTADRKVAWERIRCAIPRDKDAESKSRRIELFKRFDTNGTGKLSFREVLDGCYSILKLDEFTTHLPDIVQRAFDKAKDLGNKVKGVGEEDLVEFLEFRLMLCYIYDIFELTVMFDTMDKDGSLLLELQEFKEALPKWKEWGVDITDATTVFNEIDTNGSGVVTFDEFSCWAVTKKLQVCGDPDGEGAAKTTADRKVAWERIRCAIPRDKDAESKSRRIELFKQFDTNGTGKLGFREVLDGCYSILKLDEFTTHLPDIVQRAFDKAKDLGNKVKGVGEEDLVEFLEFRLMLCYIYDIFELTVMFDTMDKDGSLLLELQEFKEALKKWKEWGVDITDATTVFNEIDTNGSGVVTFDEFSCWAVTKKLQVCGDPDGEENGANEGN.

Residues 1–27 form a disordered region; it reads MGCSASKDTTNSKDGAASKGGKDGKTT. A 2 X 186 AA almost perfect repeats region spans residues 25 to 399; that stretch reads KTTADRKVAW…LQVCGDPDGE (375 aa). Residues 48-83 form the EF-hand 1 domain; sequence ESKSRRIELFKRFDTNGTGKLSFREVLDGCYSILKL. Residues Asp-61, Asn-63, Thr-65, Lys-67, and Glu-72 each coordinate Ca(2+). The tract at residues 110-121 is ancestral calcium site 2; it reads GVGEEDLVEFLE. EF-hand domains lie at 130 to 165, 167 to 202, and 237 to 272; these read YDIFELTVMFDTMDKDGSLLLELQEFKEALPKWKEW, VDITDATTVFNEIDTNGSGVVTFDEFSCWAVTKKLQ, and ESKSRRIELFKQFDTNGTGKLGFREVLDGCYSILKL. Residues Asp-143, Asp-145, Ser-147, Glu-154, Asp-180, Asn-182, Ser-184, Glu-191, Asp-250, Asn-252, Thr-254, Lys-256, and Glu-261 each contribute to the Ca(2+) site. An ancestral calcium site 6 region spans residues 299–310; the sequence is GVGEEDLVEFLE. EF-hand domains lie at 319–354 and 356–391; these read YDIFELTVMFDTMDKDGSLLLELQEFKEALKKWKEW and VDITDATTVFNEIDTNGSGVVTFDEFSCWAVTKKLQ. The Ca(2+) site is built by Asp-332, Asp-334, Ser-336, Glu-343, Asp-369, Asn-371, Ser-373, and Glu-380.

Belongs to the calflagin family.

The protein resides in the cell projection. It localises to the cilium. It is found in the flagellum. Its function is as follows. May contribute to the rapid motility of the trypanosomes, playing a role either in flagellar structure or in calcium metabolism. Could alternate between a GDP-bound inactive form to a calcium/GTP-bound active form. This chain is Flagellar calcium-binding protein TB-44A, found in Trypanosoma brucei brucei.